A 698-amino-acid polypeptide reads, in one-letter code: DNA ligase (698 aa).

Residues 40–44 (DDVYD), 89–90 (SL), and glutamate 123 contribute to the NAD(+) site. Catalysis depends on lysine 125, which acts as the N6-AMP-lysine intermediate. 4 residues coordinate NAD(+): arginine 146, glutamate 184, lysine 300, and lysine 324. Zn(2+) is bound by residues cysteine 417, cysteine 420, cysteine 435, and cysteine 441. Residues 618–698 (SSASPVAGKA…EWLALTGAAD (81 aa)) form the BRCT domain.

It belongs to the NAD-dependent DNA ligase family. LigA subfamily. It depends on Mg(2+) as a cofactor. Mn(2+) serves as cofactor.

The catalysed reaction is NAD(+) + (deoxyribonucleotide)n-3'-hydroxyl + 5'-phospho-(deoxyribonucleotide)m = (deoxyribonucleotide)n+m + AMP + beta-nicotinamide D-nucleotide.. In terms of biological role, DNA ligase that catalyzes the formation of phosphodiester linkages between 5'-phosphoryl and 3'-hydroxyl groups in double-stranded DNA using NAD as a coenzyme and as the energy source for the reaction. It is essential for DNA replication and repair of damaged DNA. The protein is DNA ligase of Paramagnetospirillum magneticum (strain ATCC 700264 / AMB-1) (Magnetospirillum magneticum).